Reading from the N-terminus, the 77-residue chain is Exodeoxyribonuclease 7 small subunit (77 aa).

Belongs to the XseB family. Heterooligomer composed of large and small subunits.

It is found in the cytoplasm. The enzyme catalyses Exonucleolytic cleavage in either 5'- to 3'- or 3'- to 5'-direction to yield nucleoside 5'-phosphates.. Functionally, bidirectionally degrades single-stranded DNA into large acid-insoluble oligonucleotides, which are then degraded further into small acid-soluble oligonucleotides. The chain is Exodeoxyribonuclease 7 small subunit from Lysinibacillus sphaericus (strain C3-41).